A 583-amino-acid chain; its full sequence is Atlastin-2 (583 aa).

Residues 1-44 (MAEGDEAARGQQPHQGLWRRRRTSDPSAAVNHVSSTTSLGENYE) form a disordered region. The tract at residues 1-60 (MAEGDEAARGQQPHQGLWRRRRTSDPSAAVNHVSSTTSLGENYEDDDLVNSDEVMKKPCP) is N-terminal hypervariable region (HVR). At 1 to 476 (MAEGDEAARG…NIFYAARTPA (476 aa)) the chain is on the cytoplasmic side. Serine 24 is modified (phosphoserine). Positions 91–336 (DLNIVVVSVA…LVPLLLAPEN (246 aa)) constitute a GB1/RHD3-type G domain. GDP-binding residues include arginine 104, lysine 105, glycine 106, lysine 107, serine 108, phenylalanine 109, glutamine 175, arginine 244, and aspartate 245. Positions 104, 105, 106, 107, 108, and 109 each coordinate GTP. Serine 108 serves as a coordination point for Mg(2+). GTP is bound by residues arginine 244 and aspartate 245. Positions 256 to 284 (LEGGKQFLEKRLQVKQNQHEELQNVRKHI) form a coiled coil. Lysine 270 is modified (N6-methyllysine). 2 residues coordinate GDP: valine 303 and asparagine 306. Valine 303 provides a ligand contact to GTP. The interval 374 to 465 (MLQATAEANN…YANFIKHNDG (92 aa)) is 3HB (three-helix bundle) domain. Positions 466-474 (KNIFYAART) are linker. The helical transmembrane segment at 477 to 497 (TLFAVMFAMYIISGLTGFIGL) threads the bilayer. At 498-499 (NS) the chain is on the lumenal side. The chain crosses the membrane as a helical span at residues 500–520 (IAVLCNLVMGLALIFLCTWAY). The Cytoplasmic segment spans residues 521–583 (VKYSGEFREI…VSHHARLKTD (63 aa)). Residues 547–583 (KPLGDNLMEENIRQSVTNSIKAGLTDQVSHHARLKTD) are autoinhibitory domain.

Belongs to the TRAFAC class dynamin-like GTPase superfamily. GB1/RHD3 GTPase family. GB1 subfamily. As to quaternary structure, monomeric and homodimeric. The homodimer, transiently formed by two molecules on opposing membranes, is the active form mediating ER membrane fusion. Interacts with REEP5 and RTN3; these proteins are involved in endoplasmic reticulum tubular network organization. Interacts with ZFYVE27; both proteins are involved in endoplasmic reticulum tubular network organization. Expressed in peripheral tissues (at protein level).

It localises to the endoplasmic reticulum membrane. It catalyses the reaction GTP + H2O = GDP + phosphate + H(+). With its alternative C-terminus disrupting the autoinhibitory domain, this brain-specific isoform is probably more active at fusing ER membranes. In terms of biological role, atlastin-2 (ATL2) is a membrane-anchored GTPase that mediates the GTP-dependent fusion of endoplasmic reticulum (ER) membranes, maintaining the continuous ER network. It facilitates the formation of three-way junctions where ER tubules intersect. Two atlastin-2 on neighboring ER tubules bind GTP and form loose homodimers through the GB1/RHD3-type G domains and 3HB regions. Upon GTP hydrolysis, the 3HB regions tighten, pulling the membranes together to drive their fusion. After fusion, the homodimer disassembles upon release of inorganic phosphate (Pi). Subsequently, GDP dissociates, resetting the monomers to a conformation ready for a new fusion cycle. In Homo sapiens (Human), this protein is Atlastin-2.